The sequence spans 457 residues: Bifunctional protein GlmU (457 aa).

Residues 1-229 (MYNCAIILAA…YEEIMGVNSR (229 aa)) are pyrophosphorylase. UDP-N-acetyl-alpha-D-glucosamine is bound by residues 8 to 11 (LAAG), Lys22, Gln73, and 78 to 79 (GT). Residue Asp103 coordinates Mg(2+). 4 residues coordinate UDP-N-acetyl-alpha-D-glucosamine: Gly140, Glu155, Asn170, and Asn227. Asn227 provides a ligand contact to Mg(2+). Residues 230-250 (VQLSEAEIVMRKRINHKHMVN) form a linker region. The interval 251–457 (GVTFIDCEST…WLDKKGLLKK (207 aa)) is N-acetyltransferase. Arg332 and Lys350 together coordinate UDP-N-acetyl-alpha-D-glucosamine. His362 serves as the catalytic Proton acceptor. Positions 365 and 376 each coordinate UDP-N-acetyl-alpha-D-glucosamine. Residues 385-386 (NY), Ala422, and Arg439 contribute to the acetyl-CoA site.

The protein in the N-terminal section; belongs to the N-acetylglucosamine-1-phosphate uridyltransferase family. It in the C-terminal section; belongs to the transferase hexapeptide repeat family. Homotrimer. The cofactor is Mg(2+).

It localises to the cytoplasm. The enzyme catalyses alpha-D-glucosamine 1-phosphate + acetyl-CoA = N-acetyl-alpha-D-glucosamine 1-phosphate + CoA + H(+). It carries out the reaction N-acetyl-alpha-D-glucosamine 1-phosphate + UTP + H(+) = UDP-N-acetyl-alpha-D-glucosamine + diphosphate. It functions in the pathway nucleotide-sugar biosynthesis; UDP-N-acetyl-alpha-D-glucosamine biosynthesis; N-acetyl-alpha-D-glucosamine 1-phosphate from alpha-D-glucosamine 6-phosphate (route II): step 2/2. The protein operates within nucleotide-sugar biosynthesis; UDP-N-acetyl-alpha-D-glucosamine biosynthesis; UDP-N-acetyl-alpha-D-glucosamine from N-acetyl-alpha-D-glucosamine 1-phosphate: step 1/1. Its pathway is bacterial outer membrane biogenesis; LPS lipid A biosynthesis. In terms of biological role, catalyzes the last two sequential reactions in the de novo biosynthetic pathway for UDP-N-acetylglucosamine (UDP-GlcNAc). The C-terminal domain catalyzes the transfer of acetyl group from acetyl coenzyme A to glucosamine-1-phosphate (GlcN-1-P) to produce N-acetylglucosamine-1-phosphate (GlcNAc-1-P), which is converted into UDP-GlcNAc by the transfer of uridine 5-monophosphate (from uridine 5-triphosphate), a reaction catalyzed by the N-terminal domain. The sequence is that of Bifunctional protein GlmU from Clostridium botulinum (strain Loch Maree / Type A3).